The chain runs to 297 residues: Tyrosine recombinase XerC (297 aa).

The Core-binding (CB) domain maps to 1-84 (MEEIQVTFLN…TLRTFYEFWM (84 aa)). The region spanning 105–286 (YLPQFFYEEE…SNQQLRKVYL (182 aa)) is the Tyr recombinase domain. Residues Arg-145, Lys-169, His-238, Arg-241, and His-264 contribute to the active site. The active-site O-(3'-phospho-DNA)-tyrosine intermediate is the Tyr-273.

Belongs to the 'phage' integrase family. XerC subfamily. In terms of assembly, forms a cyclic heterotetrameric complex composed of two molecules of XerC and two molecules of XerD.

The protein resides in the cytoplasm. Its function is as follows. Site-specific tyrosine recombinase, which acts by catalyzing the cutting and rejoining of the recombining DNA molecules. The XerC-XerD complex is essential to convert dimers of the bacterial chromosome into monomers to permit their segregation at cell division. It also contributes to the segregational stability of plasmids. This chain is Tyrosine recombinase XerC, found in Staphylococcus haemolyticus (strain JCSC1435).